The primary structure comprises 157 residues: Endoribonuclease YbeY (157 aa).

Zn(2+) is bound by residues His122, His126, and His132.

The protein belongs to the endoribonuclease YbeY family. Zn(2+) serves as cofactor.

The protein localises to the cytoplasm. Single strand-specific metallo-endoribonuclease involved in late-stage 70S ribosome quality control and in maturation of the 3' terminus of the 16S rRNA. In Bacillus velezensis (strain DSM 23117 / BGSC 10A6 / LMG 26770 / FZB42) (Bacillus amyloliquefaciens subsp. plantarum), this protein is Endoribonuclease YbeY.